Consider the following 512-residue polypeptide: Cytochrome P450 4d1 (512 aa).

Heme is bound by residues E316 and C456.

This sequence belongs to the cytochrome P450 family. Heme is required as a cofactor.

The protein localises to the endoplasmic reticulum membrane. The protein resides in the microsome membrane. Its function is as follows. Involved in the metabolism of insect hormones and in the breakdown of synthetic insecticides. The chain is Cytochrome P450 4d1 (Cyp4d1) from Drosophila simulans (Fruit fly).